The following is a 1623-amino-acid chain: RING finger protein 17 (1623 aa).

Positions 1 to 22 (MAAEASKTGPSRSSYQRMGRKS) are disordered. An RING-type zinc finger spans residues 32-75 (CTRCGRRVSRSSGHHCELQCGHAFCELCLLMTEECTTIICPDCE). An N6-acetyllysine modification is found at Lys-234. 3 Tudor domains span residues 726 to 784 (CPVQ…FLNA), 962 to 1021 (KWEN…LKTM), and 1228 to 1285 (FWKK…PDIP). The segment at 1438–1462 (NQSNQHSDTDDSGVSGESESESLDE) is disordered. The Tudor 4 domain maps to 1479–1539 (DFRTEMPCLA…CQIPSHLMRY (61 aa)).

As to quaternary structure, interacts with MXD1, MXD3, MXD4, MXI1 and PIWIL1. Self-associates. Testis specific.

It localises to the cytoplasm. It is found in the nucleus. Functionally, seems to be involved in regulation of transcriptional activity of MYC. In vitro, inhibits DNA-binding activity of Mad-MAX heterodimers. Can recruit Mad transcriptional repressors (MXD1, MXD3, MXD4 and MXI1) to the cytoplasm. May be involved in spermiogenesis. In Homo sapiens (Human), this protein is RING finger protein 17 (RNF17).